Here is a 499-residue protein sequence, read N- to C-terminus: Neuronal acetylcholine receptor subunit alpha-7 (499 aa).

The signal sequence occupies residues 1–19 (MRGSLCLALAASILHVSLQ). The Extracellular portion of the chain corresponds to 20 to 230 (GEFQRKLYKD…VSIRRRTLYY (211 aa)). Ca(2+) is bound by residues Arg-39 and Val-41. Residues Asn-43, Asn-87, and Asn-130 are each glycosylated (N-linked (GlcNAc...) asparagine). Cysteines 147 and 161 form a disulfide. Residues Ser-169 and Tyr-207 each coordinate Ca(2+). The cysteines at positions 209 and 210 are disulfide-linked. 3 consecutive transmembrane segments (helical) span residues 231–251 (GLNL…VFLL), 259–279 (ISLG…VAEI), and 292–312 (QYFA…VIVL). Residues 257–264 (EKISLGIT) form an essential for TMEM35A/NACHO-mediated proper subunit assembly and trafficking to cell membrane region. Topologically, residues 313 to 466 (QYHHHDPDGG…WKFAACVVDR (154 aa)) are cytoplasmic. A helical transmembrane segment spans residues 467–487 (LCLMAFSVFTILCTIGILMSA).

It belongs to the ligand-gated ion channel (TC 1.A.9) family. Acetylcholine receptor (TC 1.A.9.1) subfamily. Alpha-7/CHRNA7 sub-subfamily. In terms of assembly, homopentamer. Homooligomer of the short form gives rise to unfunctional channels, as does coexpression of both long and short forms of the receptor. Can also form heteropentamers with CHRNB2, mainly found in basal forebrain cholinergic neurons. Interacts with RIC3; which is required for proper folding and assembly. Interacts with LYPD6. Interacts with CANX. Post-translationally, glycosylations at Asn-43, Asn-87 and Asn-130 are essential for TMEM35A/NACHO-mediated proper subunit assembly and trafficking to the cell membrane. In terms of tissue distribution, at least in chromaffin cells.

It localises to the postsynaptic cell membrane. The protein resides in the cell membrane. It carries out the reaction Ca(2+)(in) = Ca(2+)(out). The catalysed reaction is K(+)(in) = K(+)(out). It catalyses the reaction Na(+)(in) = Na(+)(out). The enzyme catalyses choline(out) = choline(in). It carries out the reaction NH4(+)(in) = NH4(+)(out). The catalysed reaction is L-arginine(in) = L-arginine(out). It catalyses the reaction guanidine(out) = guanidine(in). Activated by a myriad of ligands such as acetylcholine, cytisine, nicotine, choline and epibatidine. Oligomeric amyloid-beta protein 42 activates specifially CHRNA7:CHRNB2 nAchRs. Activity is modulated by positive allosteric modulators (PAMs), such as flavonoids, with a wide range of chemical diversity, pharmacological sensitivity and efficacy. AChR activity is inhibited by the antagonists alpha-conotoxons RgIA, ImI and ImII, small disulfide-constrained peptides from cone snails. Alpha-conotoxin PnIC selectively inhibits CHRNA7:CHRNB2 over CHRNA7 homopentamer. Its function is as follows. Component of neuronal acetylcholine receptors (nAChRs) that function as pentameric, ligand-gated cation channels with high calcium permeability among other activities. nAChRs are excitatory neurotrasnmitter receptors formed by a collection of nAChR subunits known to mediate synaptic transmission in the nervous system and the neuromuscular junction. Each nAchR subunit confers differential attributes to channel properties, including activation, deactivation and desensitization kinetics, pH sensitivity, cation permeability, and binding to allosteric modulators. CHRNA7 forms homopentameric neuronal acetylcholine receptors abundantly expressed in the central nervous system, characterized by fast desensitization and high calcium permeability. Also forms heteropentamers with CHRNB2, mainly expressed in basal forebrain cholinergic neurons. Involved in the modulation of calcium-dependent signaling pathways and influences the release of neurotransmitters, including dopamine, glutamate and GABA. Also expressed in non-neuronal cells such as immune cells like lymphocytes, monocytes and macrophages. In T cells, activation induces metabotropic signaling that results in an increase of intracellular Ca2+ concentrations, independent of ionotropic receptor functions. In macrophages, required for acetylcholine-mediated inhibition of TNF and other inflammatory cytokine release. Once activated by acetylcholine, nicotine or other agonists, selectively inhibits production of pro-inflammatory cytokines while leaving anti-inflammatory cytokines undisturbed. Stimulates the cholinergic anti-inflammatory pathway, controlling inflammation by inhibiting NFKB nuclear translocation and activating the JAK2-STAT3 pathway, independently of ion channel activity. Also expressed in the urothelium where it modulates reflex bladder activity by increasing intracellular calcium through internal stores and decreasing basal ATP release. This chain is Neuronal acetylcholine receptor subunit alpha-7 (CHRNA7), found in Bos taurus (Bovine).